Reading from the N-terminus, the 230-residue chain is Orotidine 5'-phosphate decarboxylase (230 aa).

Residues D10, K32, 59 to 68 (DLKYHDIPNT), T119, R180, Q189, G209, and R210 each bind substrate. K61 serves as the catalytic Proton donor.

This sequence belongs to the OMP decarboxylase family. Type 1 subfamily. As to quaternary structure, homodimer.

It catalyses the reaction orotidine 5'-phosphate + H(+) = UMP + CO2. The protein operates within pyrimidine metabolism; UMP biosynthesis via de novo pathway; UMP from orotate: step 2/2. Catalyzes the decarboxylation of orotidine 5'-monophosphate (OMP) to uridine 5'-monophosphate (UMP). The chain is Orotidine 5'-phosphate decarboxylase from Haemophilus influenzae (strain ATCC 51907 / DSM 11121 / KW20 / Rd).